The following is a 125-amino-acid chain: Small ribosomal subunit protein uS12m (125 aa).

A disordered region spans residues 1–24; it reads MPTSNQSIRHGREKKRRTDRTRAL. The span at 9-19 shows a compositional bias: basic residues; it reads RHGREKKRRTD.

It belongs to the universal ribosomal protein uS12 family.

The protein localises to the mitochondrion. In terms of biological role, protein S12 is involved in the translation initiation step. The protein is Small ribosomal subunit protein uS12m (RPS12) of Pinus sylvestris (Scotch pine).